A 366-amino-acid chain; its full sequence is Probable cyclin-dependent kinase 10 (366 aa).

The Protein kinase domain occupies 7–293 (FEKLDSIGEG…ASDAIKHPFF (287 aa)). ATP-binding positions include 13 to 21 (IGEGTYGIV) and Lys-36. The Proton acceptor role is filled by Asp-132. Residues 315–358 (FKNQNKKQNNNFNNFVQNNQTNQNNQTNQNNQTNQNNKTSQNNN) are compositionally biased toward low complexity. The interval 315–366 (FKNQNKKQNNNFNNFVQNNQTNQNNQTNQNNQTNQNNKTSQNNNMDSYKYSK) is disordered.

The protein belongs to the protein kinase superfamily. CMGC Ser/Thr protein kinase family. CDC2/CDKX subfamily.

The enzyme catalyses L-seryl-[protein] + ATP = O-phospho-L-seryl-[protein] + ADP + H(+). It catalyses the reaction L-threonyl-[protein] + ATP = O-phospho-L-threonyl-[protein] + ADP + H(+). This Dictyostelium discoideum (Social amoeba) protein is Probable cyclin-dependent kinase 10 (cdk10).